The sequence spans 946 residues: MKPLSSPLQQYWQTVVERLPEPLAEKSLSTQAKSVLTFSDFVQDSVIAHPEWLTELESQSPQADEWQHYAAWLQEALSNVSDEAGLMRELRLFRRRIMVRIAWAQTLALVTEESILQQLSHLAETLIVAARDWLYDACCREWGTPCNAQGEAQPLLILGMGKLGGGELNFSSDIDLIFAWPEHGCTQGGRRELDNAQFFTRMGQRLIKVLDQPTQDGFVYRVDMRLRPFGESGPLVLSFAALEDYYQEQGRDWERYAMVKARIMGDSEGVYANELRAMLRPFVFRRYIDFSVIQSLRNMKGMIAREVRRRGLTDNIKLGAGGIREIEFIVQVFQLIRGGREPSLQSRSLLPTLSVIAALHLLSENDAEQLRVAYLFLRRLENLLQSINDEQTQTLPSDELNRARLAWAMDFADWPQLTGALTAHMTNVRRVFNELIGDDESETQEESLSEQWRELWQDALQEDDTTPVLAHLSEDDRKQVLTLIADFRKELDKRTIGPRGRQVLDHLMPHLLSDVCAREDAAVTLSRITALLVGIVTRTTYLELLSEFPAALKHLISLCAASPMIASQLARYPLLLDELLDPNTLYQPTATDAYRDELRQYLLRVPEDDEEQQLEALRQFKQAQLLRIAAADIAGTLPVMKVSDHLTWLAEAMIDAVVQQAWVQMVARYGKPNHLNDREGRGFAVVGYGKLGGWELGYSSDLDLIFLHDCPMDAMTDGEREIDGRQFYLRLAQRIMHLFNTRTSSGILYEVDARLRPSGAAGMLVTSAEAFADYQKNEAWTWEHQALVRARVVYGDPQLTAHFDAVRREIMTLPREGKTLQTEVREMREKMRAHLGNKHRNRFDIKADEGGITDIEFITQYLVLRYAHEKPKLTRWSDNVRILELLAQNDIMEEQEAMALTRAYTTLRDELHHLALQELPGHVSEDCFTAERDLVRASWQKWLVEE.

The adenylyl removase stretch occupies residues 1–440 (MKPLSSPLQQ…VFNELIGDDE (440 aa)). Residues 449-946 (SEQWRELWQD…ASWQKWLVEE (498 aa)) are adenylyl transferase.

It belongs to the GlnE family. Requires Mg(2+) as cofactor.

The enzyme catalyses [glutamine synthetase]-O(4)-(5'-adenylyl)-L-tyrosine + phosphate = [glutamine synthetase]-L-tyrosine + ADP. The catalysed reaction is [glutamine synthetase]-L-tyrosine + ATP = [glutamine synthetase]-O(4)-(5'-adenylyl)-L-tyrosine + diphosphate. Involved in the regulation of glutamine synthetase GlnA, a key enzyme in the process to assimilate ammonia. When cellular nitrogen levels are high, the C-terminal adenylyl transferase (AT) inactivates GlnA by covalent transfer of an adenylyl group from ATP to specific tyrosine residue of GlnA, thus reducing its activity. Conversely, when nitrogen levels are low, the N-terminal adenylyl removase (AR) activates GlnA by removing the adenylyl group by phosphorolysis, increasing its activity. The regulatory region of GlnE binds the signal transduction protein PII (GlnB) which indicates the nitrogen status of the cell. The polypeptide is Bifunctional glutamine synthetase adenylyltransferase/adenylyl-removing enzyme (Shigella boydii serotype 18 (strain CDC 3083-94 / BS512)).